A 233-amino-acid polypeptide reads, in one-letter code: RNA/RNP complex-1-interacting phosphatase homolog (233 aa).

Basic residues predominate over residues 1–14 (MSNYHHNHNYQHRP). The segment at 1-21 (MSNYHHNHNYQHRPRGYERLP) is disordered. The region spanning 34–206 (NVGRDIDGTR…LYEAERKKKY (173 aa)) is the Tyrosine-protein phosphatase domain. The active-site Phosphocysteine intermediate is the Cys150. 151–156 (THGLNR) is a substrate binding site. Catalysis depends on Arg156, which acts as the Proton donor/acceptor. The disordered stretch occupies residues 204–233 (KKYGKSSGKSSGNSADSTISSEQLHRNNSQ). A compositionally biased stretch (low complexity) spans 208–217 (KSSGKSSGNS). Residues 218–233 (ADSTISSEQLHRNNSQ) are compositionally biased toward polar residues.

Belongs to the protein-tyrosine phosphatase family. Non-receptor class dual specificity subfamily. In terms of assembly, interacts with the ERI/DICER complex component dcr-1. Interacts with ERI/DICER complex components rrf-3 and isoform b of eri-1. Interacts with drh-3 and rde-8.

The protein localises to the cytoplasm. The protein resides in the nucleus. Functionally, RNA polyphosphatase which has RNA 5'-triphosphatase and diphosphatase activities. Displays poor protein-tyrosine phosphatase activity. Binds to 5'-triphosphorylated RNAs (also called ppp-RNAs). Dephosphorylates ppp-RNAs converting them to 5'-monophosphorylated RNAs (also called p-RNAs). During small-RNA-mediated gene-silencing or RNA interference (RNAi), involved in the dcr-1-mediated processing of an amplified dsRNA intermediate. This is most likely in association with several components of the ERI/DICER complex including dcr-1, eri-1 and rrf-3. Plays a role in the biogenesis of 26G small interfering RNAs (26G-siRNAs), which are a class of 26 nucleotide siRNAs that possess a guanine residue at the 5'-end, by dephosphorylating 5'-triphosphorylated 26G-siRNAs prior to their maturation by the ERI/DICER complex. Plays a role in the biogenesis of csr-1-bound 22G small interfering RNAs (22G-siRNAs), which are a class of 22 nucleotide siRNAs that possess a guanine residue at the 5'-end. Not required for the biogenesis of microRNAs (miRNA) or for the biogenesis of a class of 21 nucleotide PIWI-interacting RNAs (piRNAs) that possess a uracil residue at the 5'-end (also called 21U-RNAs). The protein is RNA/RNP complex-1-interacting phosphatase homolog of Caenorhabditis elegans.